The chain runs to 357 residues: Popeye domain-containing protein 1 (357 aa).

Residues 1–38 (MDTTAISPLTPLGVIPDLKNATSVPFNETACENWKEIH) lie on the Extracellular side of the membrane. 2 N-linked (GlcNAc...) asparagine glycosylation sites follow: Asn-20 and Asn-27. Residues 39–59 (HLVFHVANICFAAGLVIPTTL) form a helical membrane-spanning segment. The Cytoplasmic segment spans residues 60–62 (NLH). Residues 63–83 (MIFLRGLLTVGCALFIIWATL) traverse the membrane as a helical segment. Residues 84-89 (YRCALD) lie on the Extracellular side of the membrane. A helical transmembrane segment spans residues 90–110 (IMIWNSVFLVVNLLHFIYLVY). Residues 111-357 (KRRPIKIEKE…AEKLELQRLP (247 aa)) are Cytoplasmic-facing. The span at 309-323 (GTSSSSSLRPGRTSP) shows a compositional bias: low complexity. Positions 309-357 (GTSSSSSLRPGRTSPYLRTSAKMKPIEESVEDDVFEAPSAEKLELQRLP) are disordered. Basic and acidic residues predominate over residues 347–357 (SAEKLELQRLP).

It belongs to the popeye family. In terms of assembly, homodimer. Homodimerization requires the C-terminus cytoplasmic region. In terms of tissue distribution, expressed in the heart and skeletal muscle (at protein level). Isoform 1 and isoform 4: expressed in heart, muscle, brain, stomach, kidney, lung and spleen.

Its subcellular location is the lateral cell membrane. It localises to the cell junction. It is found in the tight junction. The protein localises to the membrane. The protein resides in the cell membrane. Its subcellular location is the sarcolemma. It localises to the caveola. Functionally, cell adhesion molecule involved in the establishment and/or maintenance of cell integrity. Involved in the formation and regulation of the tight junction (TJ) paracellular permeability barrier in epithelial cells. Induces primordial adhesive contact and aggregation of epithelial cells in a Ca(2+)-independent manner. Involved in epithelial movement during corneal sheet formation and regeneration. May play a role in VAMP3-mediated vesicular transport and recycling of receptor molecules. May play a role in the regulation of cell shape and movement by modulating the Rho-GTPase activity. May be involved in skeletal muscle and heart development as well as in the maintenance of heart function. May also be involved in striated muscle regeneration and in the regulation of cell spreading. This chain is Popeye domain-containing protein 1 (POPDC1), found in Gallus gallus (Chicken).